The primary structure comprises 179 residues: Proteasome chaperone 3 (179 aa).

The protein belongs to the PSMG3 family. As to quaternary structure, component of the 20S proteasome chaperone. Forms a heterodimer with POC4 that binds to proteasome precursors. Interacts with POP2.

Its function is as follows. Involved in 20S proteasome assembly, facilitating the alpha-ring formation. This is Proteasome chaperone 3 (IRC25) from Saccharomyces cerevisiae (strain ATCC 204508 / S288c) (Baker's yeast).